The sequence spans 61 residues: MAKTSLKVKQQRTQKYQTREYSRCKICGRPHAYLRKFGICRICFRELAYKGQIPGVKKASW.

Residues C24, C27, C40, and C43 each contribute to the Zn(2+) site.

This sequence belongs to the universal ribosomal protein uS14 family. Zinc-binding uS14 subfamily. In terms of assembly, part of the 30S ribosomal subunit. Contacts proteins S3 and S10. Requires Zn(2+) as cofactor.

Binds 16S rRNA, required for the assembly of 30S particles and may also be responsible for determining the conformation of the 16S rRNA at the A site. The protein is Small ribosomal subunit protein uS14 of Alkaliphilus oremlandii (strain OhILAs) (Clostridium oremlandii (strain OhILAs)).